Consider the following 704-residue polypeptide: Myb-related protein B (704 aa).

3 HTH myb-type domains span residues 26–77 (RDNR…LRVL), 78–133 (NPDL…NPEV), and 134–184 (KKSC…KRKV). The H-T-H motif DNA-binding region spans 54-77 (WKFLASHFPNRTDQQCQYRWLRVL). A Glycyl lysine isopeptide (Lys-Gly) (interchain with G-Cter in SUMO2) cross-link involves residue Lys-104. DNA-binding regions (H-T-H motif) lie at residues 106–129 (WTLI…HNHL) and 157–180 (WAEI…NSTI). Residue Lys-197 forms a Glycyl lysine isopeptide (Lys-Gly) (interchain with G-Cter in SUMO2) linkage. Position 267 is a phosphothreonine (Thr-267). A Glycyl lysine isopeptide (Lys-Gly) (interchain with G-Cter in SUMO2) cross-link involves residue Lys-275. Ser-282 carries the phosphoserine modification. The disordered stretch occupies residues 325-412 (LSKFDLPEEP…GSGIGTPPSV (88 aa)). Residues 339–366 (SVVSSPVQPQTSQQQQEEALQSSQQAAT) show a composition bias toward low complexity. Ser-396 carries the phosphoserine modification. A Glycyl lysine isopeptide (Lys-Gly) (interchain with G-Cter in SUMO2) cross-link involves residue Lys-414. Phosphothreonine; by CDK2 occurs at positions 443 and 447. Glycyl lysine isopeptide (Lys-Gly) (interchain with G-Cter in SUMO2) cross-links involve residues Lys-450 and Lys-485. Thr-490 and Thr-497 each carry phosphothreonine; by CDK2. Glycyl lysine isopeptide (Lys-Gly) (interchain with G-Cter in SUMO2) cross-links involve residues Lys-502 and Lys-513. Thr-524 bears the Phosphothreonine; by CDK2 mark. Residues Lys-527, Lys-537, and Lys-550 each participate in a glycyl lysine isopeptide (Lys-Gly) (interchain with G-Cter in SUMO2) cross-link. A Phosphoserine; by CDK2 modification is found at Ser-581. Residues Lys-588 and Lys-600 each participate in a glycyl lysine isopeptide (Lys-Gly) (interchain with G-Cter in SUMO2) cross-link. The tract at residues 603–626 (SSTMPKPLSLPTSVTPSSCGFTSP) is disordered. The segment covering 607–620 (PKPLSLPTSVTPSS) has biased composition (low complexity). Glycyl lysine isopeptide (Lys-Gly) (interchain with G-Cter in SUMO2) cross-links involve residues Lys-629, Lys-643, and Lys-652.

In terms of assembly, component of the DREAM complex (also named LINC complex) at least composed of E2F4, E2F5, LIN9, LIN37, LIN52, LIN54, MYBL1, MYBL2, RBL1, RBL2, RBBP4, TFDP1 and TFDP2. The complex exists in quiescent cells where it represses cell cycle-dependent genes. It dissociates in S phase when LIN9, LIN37, LIN52 and LIN54 form a subcomplex that binds to MYBL2. Interacts with CCNF (via the Cyclin N-terminal domain). In terms of processing, phosphorylated by cyclin A/CDK2 during S-phase. Phosphorylation at Thr-524 is probably involved in transcriptional activity.

It localises to the nucleus. Functionally, transcription factor involved in the regulation of cell survival, proliferation, and differentiation. Transactivates the expression of the CLU gene. This is Myb-related protein B (Mybl2) from Mus musculus (Mouse).